The following is a 527-amino-acid chain: Ribonuclease Y 2 (527 aa).

A helical transmembrane segment spans residues 2–22 (IAMIATAIIGIVAGGGLGWAL). In terms of domain architecture, HD spans 339–432 (QYFHCGEVGW…VIAADAVSGA (94 aa)).

The protein belongs to the RNase Y family.

It is found in the cell membrane. Functionally, endoribonuclease that initiates mRNA decay. The chain is Ribonuclease Y 2 from Bdellovibrio bacteriovorus (strain ATCC 15356 / DSM 50701 / NCIMB 9529 / HD100).